We begin with the raw amino-acid sequence, 115 residues long: Mobilization protein MbeC (115 aa).

To E.coli MbaC and MbkC. As to quaternary structure, homodimer. Interacts with MbeA and MbeB to form the relaxosome.

Functionally, required for efficient mobilization of ColE1 plasmid and is thus essential to promote the specific transfer of the plasmid during conjugation. Probably functions by inducing DNA bending, helping the MbeA relaxase to melt the DNA around the nic site and cleave the phosphodiester bond. Binds specifically double-stranded DNA (dsDNA) containing the ColE1 oriT but does not recognize the inverted repeat (IR). The protein is Mobilization protein MbeC (mbeC) of Escherichia coli.